Here is a 446-residue protein sequence, read N- to C-terminus: Movement protein TGB1 (446 aa).

Residues N40 to R60 form a disordered region. The (+)RNA virus helicase ATP-binding domain occupies K160 to S303. G193 to S200 contacts ATP. The region spanning D304–E444 is the (+)RNA virus helicase C-terminal domain.

The protein belongs to the virgaviridae/benyvirus TGB1 movement protein family. In terms of assembly, homooligomer. Interacts with movement protein TGB3. TGB1-TGB3-TGB2 complex formation is enhanced by ATP hydrolysis. Interacts with the suppressor of RNA silencing (via N-terminus). It depends on Mg(2+) as a cofactor.

Its subcellular location is the host cell junction. The protein localises to the host plasmodesma. It localises to the host nucleus. It is found in the host cytoplasm. The protein resides in the host nucleolus. Its subcellular location is the host cytoskeleton. The catalysed reaction is ATP + H2O = ADP + phosphate + H(+). Functionally, participates in the transport of viral genome to neighboring plant cells directly through plasmodesmata, without any budding. Multifunctional movement protein with RNA-binding, ATPase and helicase activities. Engages in homologous interactions leading to the formation of a ribonucleoprotein complex containing plus-sense viral RNAs (vRNPs). ATPase activity is probably required for vRNPs movement complex assembly. Intracellular delivery of TGBp1-containing vRNPs to plasmodesmata is facilitated by TGBp2 and TGBp3. This Arachis hypogaea (Peanut) protein is Movement protein TGB1.